Reading from the N-terminus, the 173-residue chain is Alpha-crystallin A chain (173 aa).

Residue M1 is modified to N-acetylmethionine. The tract at residues 1–63 (MDIAIQHPWF…RTVLDSGISE (63 aa)) is required for complex formation with BFSP1 and BFSP2. At Q6 the chain carries Deamidated glutamine; partial. Residue S45 is modified to Phosphoserine. Q50 is subject to Deamidated glutamine; partial. The region spanning 52–162 (LFRTVLDSGI…GHSERAIPVS (111 aa)) is the sHSP domain. At K70 the chain carries N6-acetyllysine. Q90 carries the post-translational modification Deamidated glutamine; partial. N6-acetyllysine is present on K99. H100 lines the Zn(2+) pocket. A Deamidated asparagine; partial modification is found at N101. Zn(2+)-binding residues include E102 and H107. Position 122 is a phosphoserine (S122). A Deamidated asparagine; partial modification is found at N123. Residues 144–173 (PKVPSGLDAGHSERAIPVSREEKPSSAPSS) are disordered. The segment covering 153–167 (GHSERAIPVSREEKP) has biased composition (basic and acidic residues). H154 contacts Zn(2+). O-linked (GlcNAc) serine glycosylation occurs at S162.

It belongs to the small heat shock protein (HSP20) family. Heteromer composed of three CRYAA and one CRYAB subunits. Inter-subunit bridging via zinc ions enhances stability, which is crucial as there is no protein turn over in the lens. Can also form homodimers and homotetramers (dimers of dimers) which serve as the building blocks of homooligomers. Within homooligomers, the zinc-binding motif is created from residues of 3 different molecules. His-100 and Glu-102 from one molecule are ligands of the zinc ion, and His-107 and His-154 residues from additional molecules complete the site with tetrahedral coordination geometry. Part of a complex required for lens intermediate filament formation composed of BFSP1, BFSP2 and CRYAA. Acetylation at Lys-70 may increase chaperone activity. In terms of processing, undergoes age-dependent proteolytical cleavage at the C-terminus.

Its subcellular location is the cytoplasm. The protein localises to the nucleus. Its function is as follows. Contributes to the transparency and refractive index of the lens. Acts as a chaperone, preventing aggregation of various proteins under a wide range of stress conditions. Required for the correct formation of lens intermediate filaments as part of a complex composed of BFSP1, BFSP2 and CRYAA. The sequence is that of Alpha-crystallin A chain (CRYAA) from Tapirus indicus (Asiatic tapir).